Here is a 243-residue protein sequence, read N- to C-terminus: MYSGQHIKEPVTRVAGLQKSVLPMLVVDSITLFYGNRKVIDNVSFSIRPGEIITILGPNGGGKTSLVRVLVGINQDYIGTIHYTKRPIIAYMPQNFKVNSFMPMTVEYLLLSACWGRGISLDLRAVIQYVDISKLLTRQISELSAGEIQLVLLARCMVMKPDLIVLDEPVSCMDVEAKNNFYRLIGKLVSKYNISIIMTSHDLHCVMACSDRVICINRSIRCEGTPEEITESAKFMSVFPENV.

One can recognise an ABC transporter domain in the interval L25 to N242. G57–T64 contributes to the ATP binding site.

It belongs to the ABC transporter superfamily. Zinc importer (TC 3.A.1.15.5) family. The complex is composed of two ATP-binding proteins (ZnuC), two transmembrane proteins (ZnuB) and a solute-binding protein (ZnuA).

Its subcellular location is the cell inner membrane. It carries out the reaction Zn(2+)(out) + ATP(in) + H2O(in) = Zn(2+)(in) + ADP(in) + phosphate(in) + H(+)(in). Functionally, part of the ABC transporter complex ZnuABC involved in zinc import. Responsible for energy coupling to the transport system. This chain is Zinc import ATP-binding protein ZnuC, found in Anaplasma phagocytophilum (strain HZ).